Here is a 599-residue protein sequence, read N- to C-terminus: MARSTTSLFALSLVASAFARVVDYGFDVANGAVAPDGVTRNAVLVNGRFPGPLITANKGDTLKITVRNKLSDPTMRRSTTIHWHGLLQHRTAEEDGPAFVTQCPIPPQESYTYTMPLGEQTGTYWYHSHLSSQYVDGLRGPIVIYDPHDPYRNYYDVDDERTVFTLADWYHTPSEAIIATHDVLKTIPDSGTINGKGKYDPASANTNNTTLENLYTLKVKRGKRYRLRIINASAIASFRFGVQGHKCTIIEADGVLTKPIEVDAFDILAGQRYSCILKADQDPDSYWINAPITNVLNTNVQALLVYEDDKRPTHYPWKPFLTWKISNEIIQYWQHKHGSHGHKGKGHHHKVRAIGGVSGLSSRVKSRASDLSKKAVELAAALVAGEAELDKRQNEDNSTIVLDETKLIALVQPGAPGGSRPADVVVPLDFGLNFANGLWTINNVSYSPPDVPTLLKILTDKDKVDASDFTADEHTYILPKNQVVELHIKGQALGIVHPLHLHGHAFDVVQFGDNAPNYVNPPRRDVVGVTDAGVRIQFRTDNPGPWFLHCHIDWHLEEGFAMVFAEAPEDIKKGSQSVKPDGQWKKLCEKYEKLPEALQ.

Residues 1 to 19 (MARSTTSLFALSLVASAFA) form the signal peptide. Plastocyanin-like domains lie at 21 to 145 (VVDY…IVIY) and 157 to 307 (VDDE…LVYE). Cu cation-binding residues include His-82, His-84, His-127, and His-129. Cysteines 103 and 588 form a disulfide. 5 N-linked (GlcNAc...) asparagine glycosylation sites follow: Asn-207, Asn-208, Asn-231, Asn-397, and Asn-443. The Plastocyanin-like 3 domain occupies 450 to 567 (DVPTLLKILT…EGFAMVFAEA (118 aa)). Cu cation is bound by residues His-497, His-500, His-502, His-549, Cys-550, His-551, and His-555.

It belongs to the multicopper oxidase family. In terms of assembly, homodimer. Cu cation is required as a cofactor. In terms of tissue distribution, in mycelia, at a lower level than LCC4.

It localises to the secreted. It carries out the reaction 4 hydroquinone + O2 = 4 benzosemiquinone + 2 H2O. In terms of biological role, lignin degradation and detoxification of lignin-derived products. This chain is Laccase-2 (LCC2), found in Thanatephorus cucumeris (Black scurf of potato).